We begin with the raw amino-acid sequence, 183 residues long: CASP-like protein UU2 (183 aa).

Topologically, residues Met-1–Pro-33 are cytoplasmic. The chain crosses the membrane as a helical span at residues Ala-34–Ala-54. Residues Asp-55 to Ala-72 lie on the Extracellular side of the membrane. A helical membrane pass occupies residues Ile-73–Ile-93. At Arg-94–Thr-118 the chain is on the cytoplasmic side. The chain crosses the membrane as a helical span at residues Tyr-119–Gly-139. Topologically, residues Ser-140–Thr-156 are extracellular. A glycan (N-linked (GlcNAc...) asparagine) is linked at Asn-141. The chain crosses the membrane as a helical span at residues Phe-157–Val-177. At Lys-178–Ala-183 the chain is on the cytoplasmic side.

Belongs to the Casparian strip membrane proteins (CASP) family. As to quaternary structure, homodimer and heterodimers.

The protein resides in the cell membrane. The protein is CASP-like protein UU2 of Selaginella moellendorffii (Spikemoss).